The chain runs to 151 residues: Aspartate 1-decarboxylase (151 aa).

The active-site Schiff-base intermediate with substrate; via pyruvic acid is S26. S26 is subject to Pyruvic acid (Ser). Residue T58 participates in substrate binding. Residue Y59 is the Proton donor of the active site. Substrate is bound at residue 74-76 (GGA).

The protein belongs to the PanD family. As to quaternary structure, heterooctamer of four alpha and four beta subunits. Pyruvate serves as cofactor. Is synthesized initially as an inactive proenzyme, which is activated by self-cleavage at a specific serine bond to produce a beta-subunit with a hydroxyl group at its C-terminus and an alpha-subunit with a pyruvoyl group at its N-terminus.

It localises to the cytoplasm. It carries out the reaction L-aspartate + H(+) = beta-alanine + CO2. It participates in cofactor biosynthesis; (R)-pantothenate biosynthesis; beta-alanine from L-aspartate: step 1/1. Catalyzes the pyruvoyl-dependent decarboxylation of aspartate to produce beta-alanine. This Crocosphaera subtropica (strain ATCC 51142 / BH68) (Cyanothece sp. (strain ATCC 51142)) protein is Aspartate 1-decarboxylase.